A 369-amino-acid polypeptide reads, in one-letter code: Homoserine O-succinyltransferase (369 aa).

Residues Met1–Ser21 are disordered. One can recognise an AB hydrolase-1 domain in the interval Val86–Glu350. The tract at residues Gly92 to Ala95 is important for substrate specificity. The active-site Nucleophile is the Ser172. Arg233 is a substrate binding site. Active-site residues include Asp314 and His344. A substrate-binding site is contributed by Asp345.

The protein belongs to the AB hydrolase superfamily. MetX family. Homodimer.

The protein localises to the cytoplasm. It carries out the reaction L-homoserine + succinyl-CoA = O-succinyl-L-homoserine + CoA. It participates in amino-acid biosynthesis; L-methionine biosynthesis via de novo pathway; O-succinyl-L-homoserine from L-homoserine: step 1/1. Its function is as follows. Transfers a succinyl group from succinyl-CoA to L-homoserine, forming succinyl-L-homoserine. This chain is Homoserine O-succinyltransferase, found in Xanthomonas campestris pv. campestris (strain ATCC 33913 / DSM 3586 / NCPPB 528 / LMG 568 / P 25).